Consider the following 327-residue polypeptide: MPADQRPLAIALMGPTASGKTALALEAAERWNGEIVSVDSALVYRGLEIGAAKPDAAMRAAVPHHLLDLRDPWQVYSAAEFAGDARQAIAQIVARGKLPILAGGTGLYFRALLEGLSHLPEADRAARASIAAEAEQIGWAGLHSELARVDPVAAARIHATDPQRIQRALEVYRISGRPISYWQALPPGLRLPVRVLKVVLAPRERAVLHGRIERRLDAMLAQGFLAEVEQVRALPQMRAVAVPLDLPAVRAVGYRQAWEYLDGAGSLAEFRDKAIQATRQLAKRQLTWLRGELDARWFDPELDRHQLERALVGFLGDRSAVRQASGV.

Glycine 14–threonine 21 provides a ligand contact to ATP. Threonine 16–threonine 21 lines the substrate pocket. Interaction with substrate tRNA regions lie at residues aspartate 39–leucine 42 and glutamine 163–arginine 167.

It belongs to the IPP transferase family. In terms of assembly, monomer. Mg(2+) serves as cofactor.

It carries out the reaction adenosine(37) in tRNA + dimethylallyl diphosphate = N(6)-dimethylallyladenosine(37) in tRNA + diphosphate. In terms of biological role, catalyzes the transfer of a dimethylallyl group onto the adenine at position 37 in tRNAs that read codons beginning with uridine, leading to the formation of N6-(dimethylallyl)adenosine (i(6)A). The sequence is that of tRNA dimethylallyltransferase from Xanthomonas oryzae pv. oryzae (strain MAFF 311018).